A 522-amino-acid chain; its full sequence is Polyprenol-phosphate-mannose--protein mannosyltransferase (522 aa).

At 1 to 42 (MTARPPESCVLAKDRPEEPVVPVVSPGPLVPVADFGPLDRLR) the chain is on the cytoplasmic side. The helical transmembrane segment at 43–63 (GWIVTGLITLLATVTRFLNLG) threads the bilayer. Topologically, residues 64 to 119 (SLTDAGTPIFDEKHYAPQAWQVLNNHGVEDNPGYGLVVHPPVGKQLIAIGEAIFGY) are extracellular. The chain crosses the membrane as a helical span at residues 120-140 (NGFGWRFTGALLGVVLVALVV). The Cytoplasmic segment spans residues 141-149 (RIVRRISRS). A helical transmembrane segment spans residues 150 to 170 (TLVGAIAGVLLICDGVSFVTA). A topological domain (extracellular) is located at residue Arg171. The helical transmembrane segment at 172–192 (TALLDGFLTFFVVAAFGALIV) threads the bilayer. The Cytoplasmic segment spans residues 193–239 (DRDQVRERMHIALLAGRSAATVWGPRVGVRWWRFGAGVLLGLACATK). A helical transmembrane segment spans residues 240 to 260 (WSGVYFVLFFGAMALAFDVAA). Residues 261-281 (RRQYQVQRPWLGTVRRDVLPS) lie on the Extracellular side of the membrane. Residues 282–302 (GYALGLIPFAVYLATYAPWFA) form a helical membrane-spanning segment. The Cytoplasmic segment spans residues 303–390 (SETAIDRHAV…CGAQSCVKAE (88 aa)). The helical transmembrane segment at 391-411 (MLVGTPAMWWLAVPVLAYAGW) threads the bilayer. Residues 412-418 (RMFVRRD) are Extracellular-facing. Residues 419–439 (WRYAVVLVGYCAGWLPWFADI) form a helical membrane-spanning segment. Residues 440-442 (DRQ) lie on the Cytoplasmic side of the membrane. Residues 443-463 (MYFFYAATMAPFLVMGISLVL) traverse the membrane as a helical segment. At 464–478 (GDILYHPGQGSERRT) the chain is on the extracellular side. Residues 479–499 (LGLIVVCCYVALVVTNFAWLY) traverse the membrane as a helical segment. Topologically, residues 500 to 522 (PVLTGLPISQQTWNLEIWLPSWR) are cytoplasmic.

It belongs to the glycosyltransferase 39 family.

It is found in the cell membrane. The protein operates within protein modification; protein glycosylation. In terms of biological role, protein O-mannosyltransferase that catalyzes the transfer of a single mannose residue from a polyprenol phospho-mannosyl lipidic donor to the hydroxyl group of selected serine and threonine residues in acceptor proteins. This chain is Polyprenol-phosphate-mannose--protein mannosyltransferase (pmt), found in Mycobacterium tuberculosis (strain CDC 1551 / Oshkosh).